The chain runs to 787 residues: LPS-assembly protein LptD (787 aa).

The first 39 residues, 1 to 39 (MPRKTLLPLVPACDAAPRRKRLAAALLAVPGLVPAVSQA), serve as a signal peptide directing secretion.

Belongs to the LptD family. In terms of assembly, component of the lipopolysaccharide transport and assembly complex. Interacts with LptE and LptA.

Its subcellular location is the cell outer membrane. Together with LptE, is involved in the assembly of lipopolysaccharide (LPS) at the surface of the outer membrane. This is LPS-assembly protein LptD from Burkholderia thailandensis (strain ATCC 700388 / DSM 13276 / CCUG 48851 / CIP 106301 / E264).